The primary structure comprises 110 residues: U1-lycotoxin-Ls1jj (110 aa).

The N-terminal stretch at 1–20 (MKFVLLFGVLLVTLFSYSSA) is a signal peptide. Positions 21-44 (EMLDDFDQADEDELLSLIEKEEAR) are excised as a propeptide. Disulfide bonds link C47-C62, C54-C71, C61-C89, and C73-C87.

The protein belongs to the neurotoxin 19 (CSTX) family. 03 subfamily. As to expression, expressed by the venom gland.

Its subcellular location is the secreted. The sequence is that of U1-lycotoxin-Ls1jj from Lycosa singoriensis (Wolf spider).